The chain runs to 232 residues: Thiamine import ATP-binding protein ThiQ (232 aa).

Residues 2 to 230 (LKLTDITWLY…KASASALLGI (229 aa)) enclose the ABC transporter domain. ATP is bound at residue 32-39 (GPSGAGKS).

The protein belongs to the ABC transporter superfamily. Thiamine importer (TC 3.A.1.19.1) family. The complex is composed of two ATP-binding proteins (ThiQ), two transmembrane proteins (ThiP) and a solute-binding protein (ThiB).

Its subcellular location is the cell inner membrane. It catalyses the reaction thiamine(out) + ATP + H2O = thiamine(in) + ADP + phosphate + H(+). Part of the ABC transporter complex ThiBPQ involved in thiamine import. Responsible for energy coupling to the transport system. The protein is Thiamine import ATP-binding protein ThiQ of Escherichia coli (strain K12).